The following is a 479-amino-acid chain: NADH dehydrogenase [ubiquinone] flavoprotein 1, mitochondrial (479 aa).

Position 103 to 112 (103 to 112 (GRGGAGFPSG)) interacts with NADH. 216-264 (RGAGAYICGEETALIESIEGKQGKPRLKPPFPAMAGLYGCPTTVTNVET) contributes to the FMN binding site. [4Fe-4S] cluster is bound by residues Cys396, Cys399, Cys402, and Cys442.

It belongs to the complex I 51 kDa subunit family. In terms of assembly, complex I is composed of about 45 different subunits. This is a component of the flavoprotein-sulfur (FP) fragment of the enzyme. The cofactor is FMN. [4Fe-4S] cluster is required as a cofactor.

Its subcellular location is the mitochondrion inner membrane. The enzyme catalyses a ubiquinone + NADH + 5 H(+)(in) = a ubiquinol + NAD(+) + 4 H(+)(out). Its function is as follows. Core subunit of the mitochondrial membrane respiratory chain NADH dehydrogenase (Complex I) that is believed to belong to the minimal assembly required for catalysis. Complex I functions in the transfer of electrons from NADH to the respiratory chain. The immediate electron acceptor for the enzyme is believed to be ubiquinone. The sequence is that of NADH dehydrogenase [ubiquinone] flavoprotein 1, mitochondrial (ndufv1) from Dictyostelium discoideum (Social amoeba).